A 93-amino-acid polypeptide reads, in one-letter code: Co-chaperonin GroES (93 aa).

Belongs to the GroES chaperonin family. In terms of assembly, heptamer of 7 subunits arranged in a ring. Interacts with the chaperonin GroEL.

It is found in the cytoplasm. In terms of biological role, together with the chaperonin GroEL, plays an essential role in assisting protein folding. The GroEL-GroES system forms a nano-cage that allows encapsulation of the non-native substrate proteins and provides a physical environment optimized to promote and accelerate protein folding. GroES binds to the apical surface of the GroEL ring, thereby capping the opening of the GroEL channel. This Streptococcus constellatus protein is Co-chaperonin GroES.